Reading from the N-terminus, the 229-residue chain is Purine nucleoside phosphorylase BB_0467 (229 aa).

The Zn(2+) site is built by histidine 55, cysteine 91, and histidine 108.

Belongs to the purine nucleoside phosphorylase YfiH/LACC1 family. As to quaternary structure, homodimer. It depends on Cu(2+) as a cofactor. The cofactor is Zn(2+).

It catalyses the reaction adenosine + phosphate = alpha-D-ribose 1-phosphate + adenine. It carries out the reaction S-methyl-5'-thioadenosine + phosphate = 5-(methylsulfanyl)-alpha-D-ribose 1-phosphate + adenine. The catalysed reaction is inosine + phosphate = alpha-D-ribose 1-phosphate + hypoxanthine. The enzyme catalyses adenosine + H2O + H(+) = inosine + NH4(+). Purine nucleoside enzyme that catalyzes the phosphorolysis of adenosine and inosine nucleosides, yielding D-ribose 1-phosphate and the respective free bases, adenine and hypoxanthine. Also catalyzes the phosphorolysis of S-methyl-5'-thioadenosine into adenine and S-methyl-5-thio-alpha-D-ribose 1-phosphate. Also has adenosine deaminase activity. The protein is Purine nucleoside phosphorylase BB_0467 of Borreliella burgdorferi (strain ATCC 35210 / DSM 4680 / CIP 102532 / B31) (Borrelia burgdorferi).